The primary structure comprises 314 residues: N-myc-interactor (314 aa).

A disordered region spans residues 1-24 (MDADKDNIKQACDERSAEMDDMRG). At Ser-16 the chain carries Phosphoserine. Residues 31-65 (VHEIMSENKELDEEIKKLEAELQSDAREFQIKENV) adopt a coiled-coil conformation. NID domains lie at 104–193 (GQAL…GEVE) and 202–293 (RSAV…EVEV).

The protein belongs to the NMI family. Interacts with MYCN and MYC, as well as with other transcription factors with a Zip, HLH or a HLH-Zip motif. Interacts with all STAT proteins except STAT2. Interacts with IRF7, the interaction is direct and leads to the inhibition of IRF7-mediated type I IFN production. Interacts (via coiled-coil domain) with TRIM21 (via the SPRY domain); the interaction leads to 'Lys-63'-linked ubiquitination of NMI. Interacts with IFI35; the interaction is direct and is facilitated by TRIM21. Interacts with TLR4; the interaction is direct and leads to NF-kappa-B activation. In terms of processing, may be ubiquitinated. Expressed in macrophages.

Its subcellular location is the cytoplasm. It localises to the nucleus. The protein resides in the secreted. Its function is as follows. Acts as a signaling pathway regulator involved in innate immune system response. In response to interleukin 2/IL2 and interferon IFN-gamma/IFNG, interacts with signal transducer and activator of transcription/STAT which activate the transcription of downstream genes involved in a multitude of signals for development and homeostasis. Enhances the recruitment of CBP/p300 coactivators to STAT1 and STAT5, resulting in increased STAT1- and STAT5-dependent transcription. In response to interferon IFN-alpha, associates in a complex with transcriptional regulator IFI35 to regulate immune response; the complex formation prevents proteasome-mediated degradation of IFI35. In complex with IFI35, negatively regulates nuclear factor NF-kappa-B signaling by inhibiting the nuclear translocation, activation and transcription of NF-kappa-B subunit p65/RELA, resulting in the inhibition of endothelial cell proliferation, migration and re-endothelialization of injured arteries. Negatively regulates virus-triggered type I interferon/IFN production by inducing proteosome-dependent degradation of IRF7, a transcriptional regulator of type I IFN, thereby interfering with cellular antiviral responses. Beside its role as an intracellular signaling pathway regulator, also functions extracellularly as damage-associated molecular patterns (DAMPs) to promote inflammation, when actively released by macrophage to the extracellular space during cell injury or pathogen invasion. Macrophage-secreted NMI activates NF-kappa-B signaling in adjacent macrophages through Toll-like receptor 4/TLR4 binding and activation, thereby inducing NF-kappa-B translocation from the cytoplasm into the nucleus which promotes the release of pro-inflammatory cytokines. The polypeptide is N-myc-interactor (Mus musculus (Mouse)).